We begin with the raw amino-acid sequence, 373 residues long: MNLLNMQPKRSEQPAMFEENRASSQEGQDLEVMYKKLHQLQARLSRSVLSEAIKEFEENLRCLFHEAKLLLCSTRTKYRQSWFGSSNEFGSSDERRIIKTSCCIIESTNTILNFLSFLEKNRGLPFGGDQRLQQAAYKGQQFAFRLLRSLTLHKAAQEVPGKDFGLVYGKDVYVLNGHILHRSKQEIVGQAGGRNWHVDHTLHPLRRVPGTPWHKFFGNLEVGDDKQLRLFDDDAAVDSYRVGPQKFFVVIPETAEFILDEVSSEHQRVATIHTENGHVQPPAPTSIQQEALLRKLDFAMTTSLPGYVVEGQPEIVFHHEGLRQIPVDYSQERPLSILSHVFTRPALWGEGLELADHFDPRDGVQQEEHIYYI.

Residues 1 to 22 form a disordered region; sequence MNLLNMQPKRSEQPAMFEENRA.

This sequence to P.anserina SMR1.

Functionally, required, together with mating-type protein A-3, for efficient ascospore formation. The protein is Mating-type protein A-2 (matA-2) of Neurospora crassa (strain ATCC 24698 / 74-OR23-1A / CBS 708.71 / DSM 1257 / FGSC 987).